We begin with the raw amino-acid sequence, 303 residues long: Recombination-associated protein RdgC (303 aa).

It belongs to the RdgC family.

The protein resides in the cytoplasm. The protein localises to the nucleoid. Its function is as follows. May be involved in recombination. This is Recombination-associated protein RdgC from Aeromonas hydrophila subsp. hydrophila (strain ATCC 7966 / DSM 30187 / BCRC 13018 / CCUG 14551 / JCM 1027 / KCTC 2358 / NCIMB 9240 / NCTC 8049).